The sequence spans 380 residues: Cytochrome b (380 aa).

A run of 4 helical transmembrane segments spans residues 34 to 54 (FGSL…LLAM), 78 to 99 (WLIR…YMHI), 114 to 134 (WNTG…GYVL), and 179 to 199 (FFAL…IHLT). The heme b site is built by His84 and His98. Residues His183 and His197 each contribute to the heme b site. His202 contributes to the a ubiquinone binding site. A run of 4 helical transmembrane segments spans residues 227 to 247 (SKDI…ALFS), 289 to 309 (LGGV…PFLH), 321 to 341 (LSQM…WIGS), and 348 to 368 (FIII…ILLP).

The protein belongs to the cytochrome b family. In terms of assembly, the cytochrome bc1 complex contains 11 subunits: 3 respiratory subunits (MT-CYB, CYC1 and UQCRFS1), 2 core proteins (UQCRC1 and UQCRC2) and 6 low-molecular weight proteins (UQCRH/QCR6, UQCRB/QCR7, UQCRQ/QCR8, UQCR10/QCR9, UQCR11/QCR10 and a cleavage product of UQCRFS1). This cytochrome bc1 complex then forms a dimer. Heme b serves as cofactor.

It is found in the mitochondrion inner membrane. Functionally, component of the ubiquinol-cytochrome c reductase complex (complex III or cytochrome b-c1 complex) that is part of the mitochondrial respiratory chain. The b-c1 complex mediates electron transfer from ubiquinol to cytochrome c. Contributes to the generation of a proton gradient across the mitochondrial membrane that is then used for ATP synthesis. The sequence is that of Cytochrome b (MT-CYB) from Caracara plancus (Southern caracara).